A 247-amino-acid chain; its full sequence is Cell division protein ZapD (247 aa).

The protein belongs to the ZapD family. As to quaternary structure, interacts with FtsZ.

It is found in the cytoplasm. Functionally, cell division factor that enhances FtsZ-ring assembly. Directly interacts with FtsZ and promotes bundling of FtsZ protofilaments, with a reduction in FtsZ GTPase activity. This chain is Cell division protein ZapD, found in Salmonella choleraesuis (strain SC-B67).